The sequence spans 68 residues: Pleurocidin (68 aa).

A signal peptide spans 1-22 (MKFTATFLMMAIFVLMVEPGEC). A propeptide spanning residues 48–68 (GDKQELNKRAVDEDPNVIVFE) is cleaved from the precursor.

Belongs to the pleurocidin family. As to expression, goblet cells.

It localises to the secreted. Its subcellular location is the membrane. In terms of biological role, antimicrobial peptide with potent activity against Gram-positive and Gram-negative bacteria. Activity against E.coli and B.subtilis. Weaker activity against L.mucor, s.marcescens and P.aeruginosa. May play a role in innate host defense. The protein is Pleurocidin (ple1) of Pseudopleuronectes americanus (Winter flounder).